Consider the following 247-residue polypeptide: Chymase (247 aa).

Residues 1–17 (MCLLSLPLLLFLQYTRA) form the signal peptide. Residues 18–21 (KAGE) constitute a propeptide, activation peptide. The 224-residue stretch at 22-245 (VIGGTECKPH…YRPWINKILK (224 aa)) folds into the Peptidase S1 domain. Cysteine 51 and cysteine 67 are disulfide-bonded. The Charge relay system role is filled by histidine 66. The N-linked (GlcNAc...) asparagine glycan is linked to asparagine 103. Aspartate 110 acts as the Charge relay system in catalysis. N-linked (GlcNAc...) asparagine glycosylation occurs at asparagine 121. Cystine bridges form between cysteine 144–cysteine 209 and cysteine 175–cysteine 188. The Charge relay system role is filled by serine 203.

This sequence belongs to the peptidase S1 family. Granzyme subfamily.

It is found in the secreted. Its subcellular location is the cytoplasmic granule. It carries out the reaction Preferential cleavage: Phe-|-Xaa &gt; Tyr-|-Xaa &gt; Trp-|-Xaa &gt; Leu-|-Xaa.. Functionally, major secreted protease of mast cells with suspected roles in vasoactive peptide generation, extracellular matrix degradation, and regulation of gland secretion. This chain is Chymase, found in Cavia porcellus (Guinea pig).